Reading from the N-terminus, the 415-residue chain is rRNA methyltransferase 3, mitochondrial (415 aa).

The transit peptide at 1–47 (MAALCRGTVRACILKPLGLSVSLQVKRNVRALRRTPVRVLPAAEKGR) directs the protein to the mitochondrion. Residues 41–73 (PAAEKGRERKEVEARRPQQPRQSEYQTRTSQGV) are disordered. A compositionally biased stretch (basic and acidic residues) spans 44-56 (EKGRERKEVEARR). Positions 59–73 (QPRQSEYQTRTSQGV) are enriched in polar residues. 3 residues coordinate S-adenosyl-L-methionine: glycine 357, isoleucine 381, and leucine 390.

Belongs to the class IV-like SAM-binding methyltransferase superfamily. RNA methyltransferase TrmH family.

The protein localises to the mitochondrion. It catalyses the reaction a uridine in rRNA + S-adenosyl-L-methionine = a 2'-O-methyluridine in rRNA + S-adenosyl-L-homocysteine + H(+). S-adenosyl-L-methionine-dependent 2'-O-ribose methyltransferase that catalyzes the formation of 2'-O-methylguanosine at position 1370 (Gm1370) in the mitochondrial large subunit ribosomal RNA (mtLSU rRNA), a conserved modification in the peptidyl transferase domain of the mtLSU rRNA. Also required for formation of 2'-O-methyluridine at position 1369 (Um1369) mediated by MRM2. This Xenopus tropicalis (Western clawed frog) protein is rRNA methyltransferase 3, mitochondrial.